Consider the following 307-residue polypeptide: Aspartate carbamoyltransferase catalytic subunit (307 aa).

Carbamoyl phosphate-binding residues include arginine 58 and threonine 59. Residue lysine 86 coordinates L-aspartate. Arginine 108, histidine 138, and glutamine 141 together coordinate carbamoyl phosphate. L-aspartate-binding residues include arginine 171 and arginine 223. Carbamoyl phosphate contacts are provided by alanine 264 and proline 265.

It belongs to the aspartate/ornithine carbamoyltransferase superfamily. ATCase family. In terms of assembly, heterododecamer (2C3:3R2) of six catalytic PyrB chains organized as two trimers (C3), and six regulatory PyrI chains organized as three dimers (R2).

The catalysed reaction is carbamoyl phosphate + L-aspartate = N-carbamoyl-L-aspartate + phosphate + H(+). It participates in pyrimidine metabolism; UMP biosynthesis via de novo pathway; (S)-dihydroorotate from bicarbonate: step 2/3. Its function is as follows. Catalyzes the condensation of carbamoyl phosphate and aspartate to form carbamoyl aspartate and inorganic phosphate, the committed step in the de novo pyrimidine nucleotide biosynthesis pathway. This chain is Aspartate carbamoyltransferase catalytic subunit, found in Streptococcus suis (strain 98HAH33).